A 364-amino-acid polypeptide reads, in one-letter code: Putative acetyl-CoA C-acetyltransferase YhfS (364 aa).

C82 (acyl-thioester intermediate) is an active-site residue. Catalysis depends on H318, which acts as the Proton acceptor.

It belongs to the thiolase-like superfamily. Thiolase family.

Functionally, may be involved in fatty acid metabolism. The chain is Putative acetyl-CoA C-acetyltransferase YhfS (yhfS) from Bacillus subtilis (strain 168).